The chain runs to 3977 residues: Hybrid PKS-NRPS synthetase gkaA (3977 aa).

In terms of domain architecture, Ketosynthase family 3 (KS3) spans 4 to 441; that stretch reads EEPIAVIGSG…GTNAHVILEN (438 aa). Active-site for beta-ketoacyl synthase activity residues include Cys177, His316, and His361. The region spanning 551 to 867 is the Malonyl-CoA:ACP transacylase (MAT) domain; the sequence is VFTGQGAQWP…TGVIHRGKND (317 aa). The segment at 937-1072 is N-terminal hotdog fold; the sequence is NPLLGTRTTD…GRITVTLGES (136 aa). The 305-residue stretch at 937-1241 folds into the PKS/mFAS DH domain; it reads NPLLGTRTTD…VVAFSEATAD (305 aa). The active-site Proton acceptor; for dehydratase activity is His969. The segment at 1087–1241 is C-terminal hotdog fold; it reads LVSIPQDRFY…VVAFSEATAD (155 aa). Catalysis depends on Asp1147, which acts as the Proton donor; for dehydratase activity. Positions 1286–1580 are methyltransferase (cMeT) domain; it reads YMKKTVEEFP…FSGIDSSTPE (295 aa). Positions 2128–2301 constitute a Ketoreductase (KR) domain; that stretch reads TYVLFGLTSD…AASILHIGAV (174 aa). Positions 2409–2490 constitute a Carrier 1 domain; sequence SEVFEIISGA…QLLEYAIDNM (82 aa). Ser2450 carries the post-translational modification O-(pantetheine 4'-phosphoryl)serine. A disordered region spans residues 2497–2542; that stretch reads HSNGEQGTVSDSGSTNIQLTPASTPSVPSVNLASDSTGSSQVGEDV. The span at 2499–2538 shows a compositional bias: polar residues; that stretch reads NGEQGTVSDSGSTNIQLTPASTPSVPSVNLASDSTGSSQV. Residues 2584 to 3018 form a condensation region; the sequence is EKIIPMSPGQ…LKDISLFSKE (435 aa). The interval 3048 to 3437 is adenylation; that stretch reads IAEHPDTISI…GALEILGRID (390 aa). Residues 3552–3632 enclose the Carrier 2 domain; the sequence is FSLTPTEDKL…AMASLITPAS (81 aa). An O-(pantetheine 4'-phosphoryl)serine modification is found at Ser3592. One can recognise a Thioester reductase (TE) domain in the interval 3672-3890; the sequence is LTGATGFLGH…FVDLVSVQNV (219 aa).

The protein in the C-terminal section; belongs to the NRP synthetase family. Requires pantetheine 4'-phosphate as cofactor.

It functions in the pathway mycotoxin biosynthesis. In terms of biological role, hybrid PKS-NRPS synthetase; part of the gene cluster that mediates the biosynthesis of GKK1032, fungal natural products containing a macrocyclic para-cyclophane connected to a decahydrofluorene ring system that show potent antitumor activities. Within the pathway, the PKS-NRPS gkaA, with the help of the trans-enoyl reductase gkaC, synthesize the polyketide-tyrosyl acyl thioester product which can be reductively off-loaded by the terminal reductase (R) domain in gkaA. The PKS module of gkaA acts in combination with the trans-acting enoyl reductase gkaC to produce a methylated polyketide attached to the ACP domain. In parallel, the adenylation (A) domain of the NRPS module activated L-tyrosine, which is then transferred to the ACP domain. The condensation (C) domain subsequently links this group to the polyketide chain, forming an enzyme-bound amide. The alpha/beta hydrolase gkaG is then required to catalyze the subsequent Knoevenagel condensation that affords the 3-pyrrolin-2-one ring, whereas the three proteins gkaB, gkadX and gkaZ then function synergistically to form the cyclophane. This chain is Hybrid PKS-NRPS synthetase gkaA, found in Penicillium citrinum.